A 151-amino-acid polypeptide reads, in one-letter code: UPF0178 protein Hhal_1913 (151 aa).

It belongs to the UPF0178 family.

The sequence is that of UPF0178 protein Hhal_1913 from Halorhodospira halophila (strain DSM 244 / SL1) (Ectothiorhodospira halophila (strain DSM 244 / SL1)).